A 176-amino-acid chain; its full sequence is Large ribosomal subunit protein uL10 (176 aa).

It belongs to the universal ribosomal protein uL10 family. As to quaternary structure, part of the ribosomal stalk of the 50S ribosomal subunit. The N-terminus interacts with L11 and the large rRNA to form the base of the stalk. The C-terminus forms an elongated spine to which L12 dimers bind in a sequential fashion forming a multimeric L10(L12)X complex.

Its function is as follows. Forms part of the ribosomal stalk, playing a central role in the interaction of the ribosome with GTP-bound translation factors. The polypeptide is Large ribosomal subunit protein uL10 (Acaryochloris marina (strain MBIC 11017)).